Consider the following 174-residue polypeptide: Protein CURVATURE THYLAKOID 1B, chloroplastic (174 aa).

A disordered region spans residues 1-20 (MASLSVSSSSTIIDSRAPPS). A chloroplast-targeting transit peptide spans 1–63 (MASLSVSSSS…RKIVRNVVTR (63 aa)). A64 carries the N-acetylalanine modification. Residues 64–100 (ATTEVGEAPATTTEAETTELPEIVKTAQEAWEKVDDK) lie on the Stromal side of the membrane. Residues 101–121 (YAIGSLAFAGVVALWGSAGMI) form a helical membrane-spanning segment. At 122–126 (SAIDR) the chain is on the lumenal side. A helical membrane pass occupies residues 127–147 (LPLVPGVLELVGIGYTGWFTY). The Stromal segment spans residues 148–174 (KNLVFKPDREALFEKVKSTYKDILGSS).

Belongs to the CURT family. In terms of assembly, homo- and heterodimers and trimers. Interacts with PSAL. In terms of processing, phosphorylated on either Thr-65 or Thr-66 by a threonine specific thylakoid kinase.

The protein resides in the plastid. Its subcellular location is the chloroplast thylakoid membrane. Its function is as follows. Determines thylakoid architecture by inducing membrane curvature. This Arabidopsis thaliana (Mouse-ear cress) protein is Protein CURVATURE THYLAKOID 1B, chloroplastic (CURT1B).